Here is a 421-residue protein sequence, read N- to C-terminus: ATP-dependent RNA helicase RhlB (421 aa).

Residues glutamine 9–alanine 37 carry the Q motif motif. Positions leucine 40–isoleucine 219 constitute a Helicase ATP-binding domain. Position 53–60 (alanine 53–threonine 60) interacts with ATP. The short motif at aspartate 165–aspartate 168 is the DEAD box element. The region spanning arginine 245–methionine 390 is the Helicase C-terminal domain. A disordered region spans residues aspartate 392 to glycine 421. The span at proline 402–proline 414 shows a compositional bias: low complexity.

This sequence belongs to the DEAD box helicase family. RhlB subfamily. As to quaternary structure, component of the RNA degradosome, which is a multiprotein complex involved in RNA processing and mRNA degradation.

The protein resides in the cytoplasm. It carries out the reaction ATP + H2O = ADP + phosphate + H(+). Its function is as follows. DEAD-box RNA helicase involved in RNA degradation. Has RNA-dependent ATPase activity and unwinds double-stranded RNA. This chain is ATP-dependent RNA helicase RhlB, found in Escherichia coli (strain SMS-3-5 / SECEC).